The sequence spans 206 residues: Large ribosomal subunit protein uL4 (206 aa).

The segment at 43 to 94 is disordered; it reads ARSGNRAQKDREQVKHTTKKPWRQKGTGRARAGMSSSPLWRGGGRIFPNSPE. The segment covering 58 to 70 has biased composition (basic residues); that stretch reads HTTKKPWRQKGTG.

It belongs to the universal ribosomal protein uL4 family. Part of the 50S ribosomal subunit.

One of the primary rRNA binding proteins, this protein initially binds near the 5'-end of the 23S rRNA. It is important during the early stages of 50S assembly. It makes multiple contacts with different domains of the 23S rRNA in the assembled 50S subunit and ribosome. Functionally, forms part of the polypeptide exit tunnel. This Polynucleobacter asymbioticus (strain DSM 18221 / CIP 109841 / QLW-P1DMWA-1) (Polynucleobacter necessarius subsp. asymbioticus) protein is Large ribosomal subunit protein uL4.